The chain runs to 365 residues: Uroporphyrinogen decarboxylase (365 aa).

The segment covering 1–17 (MSANDSPSGQQTTTSAS) has biased composition (polar residues). The tract at residues 1–20 (MSANDSPSGQQTTTSASLDA) is disordered. Residues 48–52 (RQAGR), Asp97, Tyr172, Ser227, and His341 each bind substrate.

The protein belongs to the uroporphyrinogen decarboxylase family. In terms of assembly, homodimer.

The protein localises to the cytoplasm. The catalysed reaction is uroporphyrinogen III + 4 H(+) = coproporphyrinogen III + 4 CO2. The protein operates within porphyrin-containing compound metabolism; protoporphyrin-IX biosynthesis; coproporphyrinogen-III from 5-aminolevulinate: step 4/4. Catalyzes the decarboxylation of four acetate groups of uroporphyrinogen-III to yield coproporphyrinogen-III. This Streptomyces griseus subsp. griseus (strain JCM 4626 / CBS 651.72 / NBRC 13350 / KCC S-0626 / ISP 5235) protein is Uroporphyrinogen decarboxylase.